We begin with the raw amino-acid sequence, 207 residues long: Thaumatin-like protein 1 (207 aa).

Intrachain disulfides connect cysteine 9-cysteine 202, cysteine 50-cysteine 60, cysteine 65-cysteine 71, cysteine 117-cysteine 191, cysteine 122-cysteine 174, cysteine 130-cysteine 140, cysteine 144-cysteine 153, and cysteine 154-cysteine 161.

The protein belongs to the thaumatin family. As to quaternary structure, monomer. Not glycosylated.

The protein resides in the secreted. Functionally, acidic thaumatin-like protein. Exhibits weak beta-1,3-glucanase activity with laminarin as substrate. The chain is Thaumatin-like protein 1 (TLP1) from Manilkara zapota (Sapodilla plum).